The sequence spans 395 residues: ATP phosphoribosyltransferase regulatory subunit (395 aa).

It belongs to the class-II aminoacyl-tRNA synthetase family. HisZ subfamily. As to quaternary structure, heteromultimer composed of HisG and HisZ subunits.

The protein localises to the cytoplasm. It participates in amino-acid biosynthesis; L-histidine biosynthesis; L-histidine from 5-phospho-alpha-D-ribose 1-diphosphate: step 1/9. Required for the first step of histidine biosynthesis. May allow the feedback regulation of ATP phosphoribosyltransferase activity by histidine. This Thioalkalivibrio sulfidiphilus (strain HL-EbGR7) protein is ATP phosphoribosyltransferase regulatory subunit.